The sequence spans 335 residues: Pregnancy-specific beta-1-glycoprotein 11 (335 aa).

The first 34 residues, 1–34 (MGPLSAPPCTEHIKWKGLLLTALLLNFWNLPTTA), serve as a signal peptide directing secretion. The Ig-like V-type domain occupies 35–144 (QVMIEAQPPK…TGYFTFTLYL (110 aa)). Residues Asn-61, Asn-104, and Asn-111 are each glycosylated (N-linked (GlcNAc...) asparagine). A Cell attachment site motif is present at residues 127–129 (RGD). Ig-like C2-type domains follow at residues 147-234 (PKPS…VTLN) and 242-317 (PRIF…TSLT). Cystine bridges form between Cys-169–Cys-217 and Cys-261–Cys-301.

It belongs to the immunoglobulin superfamily. CEA family.

It is found in the secreted. The chain is Pregnancy-specific beta-1-glycoprotein 11 (PSG11) from Homo sapiens (Human).